A 503-amino-acid chain; its full sequence is V-type proton ATPase subunit B (503 aa).

Arg-378 contacts ATP. Phosphoserine occurs at positions 491, 492, 502, and 503.

This sequence belongs to the ATPase alpha/beta chains family. As to quaternary structure, V-ATPase is a heteromultimeric enzyme composed of a peripheral catalytic V1 complex (components A to H) attached to an integral membrane V0 proton pore complex (components: a, c, c', c'', d, e, f and VOA1). Interacts with rav1.

The protein resides in the vacuole membrane. Functionally, non-catalytic subunit of the V1 complex of vacuolar(H+)-ATPase (V-ATPase), a multisubunit enzyme composed of a peripheral complex (V1) that hydrolyzes ATP and a membrane integral complex (V0) that translocates protons. V-ATPase is responsible for acidifying and maintaining the pH of intracellular compartments. This Schizosaccharomyces pombe (strain 972 / ATCC 24843) (Fission yeast) protein is V-type proton ATPase subunit B.